Here is a 372-residue protein sequence, read N- to C-terminus: Carbamoyl phosphate synthase small chain (372 aa).

The CPSase stretch occupies residues 1-186 (MTYCKRGTEG…IHQNNSPDII (186 aa)). Residues S52, G233, and G235 each contribute to the L-glutamine site. The Glutamine amidotransferase type-1 domain maps to 185-372 (IIVLVDCGIK…KKMVIKDEGN (188 aa)). Residue C261 is the Nucleophile of the active site. The L-glutamine site is built by L262, Q265, N303, G305, and Y306. Active-site residues include H345 and E347.

The protein belongs to the CarA family. As to quaternary structure, composed of two chains; the small (or glutamine) chain promotes the hydrolysis of glutamine to ammonia, which is used by the large (or ammonia) chain to synthesize carbamoyl phosphate. Tetramer of heterodimers (alpha,beta)4.

The catalysed reaction is hydrogencarbonate + L-glutamine + 2 ATP + H2O = carbamoyl phosphate + L-glutamate + 2 ADP + phosphate + 2 H(+). The enzyme catalyses L-glutamine + H2O = L-glutamate + NH4(+). The protein operates within amino-acid biosynthesis; L-arginine biosynthesis; carbamoyl phosphate from bicarbonate: step 1/1. It participates in pyrimidine metabolism; UMP biosynthesis via de novo pathway; (S)-dihydroorotate from bicarbonate: step 1/3. Small subunit of the glutamine-dependent carbamoyl phosphate synthetase (CPSase). CPSase catalyzes the formation of carbamoyl phosphate from the ammonia moiety of glutamine, carbonate, and phosphate donated by ATP, constituting the first step of 2 biosynthetic pathways, one leading to arginine and/or urea and the other to pyrimidine nucleotides. The small subunit (glutamine amidotransferase) binds and cleaves glutamine to supply the large subunit with the substrate ammonia. This is Carbamoyl phosphate synthase small chain from Metallosphaera sedula (strain ATCC 51363 / DSM 5348 / JCM 9185 / NBRC 15509 / TH2).